A 273-amino-acid chain; its full sequence is L-cysteine S-thiosulfotransferase subunit SoxA (273 aa).

The signal sequence occupies residues 1–24 (MKKTVTAVALLCALSSTAIAPTFA). Cysteine 74 and cysteine 110 are joined by a disulfide. The region spanning 162–273 (EMYELGKRMF…GVMLTPGIKR (112 aa)) is the Cytochrome c domain. Cysteine 182 and histidine 186 together coordinate heme. Substrate is bound at residue arginine 230. Residue cysteine 234 participates in heme binding. The active-site Cysteine persulfide intermediate is the cysteine 234.

This sequence belongs to the SoxA family. In terms of assembly, heterodimer of SoxA and SoxX. It depends on heme as a cofactor. Cysteine persulfide at Cys-234.

It is found in the periplasm. It carries out the reaction L-cysteinyl-[SoxY protein] + thiosulfate + 2 Fe(III)-[cytochrome c] = S-sulfosulfanyl-L-cysteinyl-[SoxY protein] + 2 Fe(II)-[cytochrome c] + 2 H(+). It catalyses the reaction S-sulfanyl-L-cysteinyl-[SoxY protein] + thiosulfate + 2 Fe(III)-[cytochrome c] = S-(2-sulfodisulfanyl)-L-cysteinyl-[SoxY protein] + 2 Fe(II)-[cytochrome c] + 2 H(+). C-type monoheme cytochrome, which is part of the SoxAX cytochrome complex involved in sulfur oxidation. The SoxAX complex catalyzes the formation of a heterodisulfide bond between the conserved cysteine residue on a sulfur carrier SoxYZ complex subunit SoxY and thiosulfate or other inorganic sulfur substrates. This leads to the liberation of two electrons, which may be transferred from the SoxAX complex to another cytochrome c that then channels them into the respiratory electron transport chain. Some electrons may be used for reductive CO(2) fixation. The chain is L-cysteine S-thiosulfotransferase subunit SoxA from Hydrogenophilus thermoluteolus (Pseudomonas hydrogenothermophila).